We begin with the raw amino-acid sequence, 253 residues long: uncharacterized protein (253 aa).

This is an uncharacterized protein from Bacillus subtilis (strain 168).